Reading from the N-terminus, the 339-residue chain is Cathepsin B (339 aa).

An N-terminal signal peptide occupies residues 1 to 17; that stretch reads MWWSLIPLSCLLALTSA. The propeptide at 18-79 is activation peptide; the sequence is HDKPSSHPLS…ERVGFSEDIN (62 aa). Disulfide bonds link C93/C122, C105/C150, C141/C207, C142/C146, C179/C211, and C187/C198. Residue C108 is part of the active site. N192 carries N-linked (GlcNAc...) asparagine glycosylation. K220 carries the N6-acetyllysine modification. Residues H278 and N298 contribute to the active site. Positions 334-339 are excised as a propeptide; that stretch reads QYWGRF.

This sequence belongs to the peptidase C1 family. In terms of assembly, dimer of a heavy chain and a light chain cross-linked by a disulfide bond. Interacts with SRPX2. Directly interacts with SHKBP1. Expressed in the epithelial cells of the prostate and mammary gland.

The protein resides in the lysosome. It is found in the melanosome. The protein localises to the secreted. It localises to the extracellular space. Its subcellular location is the apical cell membrane. It catalyses the reaction Hydrolysis of proteins with broad specificity for peptide bonds. Preferentially cleaves -Arg-Arg-|-Xaa bonds in small molecule substrates (thus differing from cathepsin L). In addition to being an endopeptidase, shows peptidyl-dipeptidase activity, liberating C-terminal dipeptides.. In terms of biological role, thiol protease which is believed to participate in intracellular degradation and turnover of proteins. Cleaves matrix extracellular phosphoglycoprotein MEPE. Involved in the solubilization of cross-linked TG/thyroglobulin in the thyroid follicle lumen. Has also been implicated in tumor invasion and metastasis. The sequence is that of Cathepsin B (Ctsb) from Rattus norvegicus (Rat).